The chain runs to 177 residues: Ribulose bisphosphate carboxylase small subunit, chloroplastic 5 (177 aa).

The transit peptide at 1–56 directs the protein to the chloroplast; sequence MASSMMASTAAVARAGPAQSSMVAPFNGLRSSVAFPATRKANNDLSTLPSNGGRVS.

Belongs to the RuBisCO small chain family. As to quaternary structure, heterohexadecamer of 8 large and 8 small subunits.

The protein resides in the plastid. It is found in the chloroplast. Its function is as follows. RuBisCO catalyzes two reactions: the carboxylation of D-ribulose 1,5-bisphosphate, the primary event in carbon dioxide fixation, as well as the oxidative fragmentation of the pentose substrate. Both reactions occur simultaneously and in competition at the same active site. Although the small subunit is not catalytic it is essential for maximal activity. In Lemna gibba (Swollen duckweed), this protein is Ribulose bisphosphate carboxylase small subunit, chloroplastic 5.